Consider the following 255-residue polypeptide: 2-(S)-hydroxypropyl-CoM dehydrogenase 3 (255 aa).

Residues isoleucine 19, aspartate 38, 64–65 (DV), and asparagine 91 each bind NAD(+). Positions 143 and 156 each coordinate (S)-2-hydroxypropyl-coenzyme M. Tyrosine 156 serves as the catalytic Proton acceptor. Lysine 160 serves as a coordination point for NAD(+). Position 188 (threonine 188) interacts with (S)-2-hydroxypropyl-coenzyme M. Position 189–193 (189–193 (VTSTG)) interacts with NAD(+). A (S)-2-hydroxypropyl-coenzyme M-binding site is contributed by tyrosine 215.

This sequence belongs to the short-chain dehydrogenases/reductases (SDR) family. In terms of assembly, homotetramer.

The enzyme catalyses (S)-2-hydroxypropyl-coenzyme M + NAD(+) = 2-oxopropyl-coenzyme M + NADH + H(+). Not inhibited by 2-(2-methyl-2-hydroxypropylthio)ethanesulfonate (M-HPC), an achiral analog of both R-HPC and S-HPC. In terms of biological role, involved in aliphatic epoxide carboxylation. Catalyzes the reversible oxidation of (2S)-2-hydroxypropyl-coenzyme M (S-HPC) to 2-oxopropyl-coenzyme M (2-KPC). The enzyme is highly specific for the S enantiomers. In vitro can also use the aliphatic ketone 2-butanone and the aliphatic alcohol 2-propanol, and shows an inherent stereoselectivity for 2-butanone reduction. The polypeptide is 2-(S)-hydroxypropyl-CoM dehydrogenase 3 (Xanthobacter autotrophicus (strain ATCC BAA-1158 / Py2)).